A 574-amino-acid polypeptide reads, in one-letter code: Proline--tRNA ligase (574 aa).

It belongs to the class-II aminoacyl-tRNA synthetase family. ProS type 1 subfamily. Homodimer.

The protein localises to the cytoplasm. The catalysed reaction is tRNA(Pro) + L-proline + ATP = L-prolyl-tRNA(Pro) + AMP + diphosphate. Its function is as follows. Catalyzes the attachment of proline to tRNA(Pro) in a two-step reaction: proline is first activated by ATP to form Pro-AMP and then transferred to the acceptor end of tRNA(Pro). As ProRS can inadvertently accommodate and process non-cognate amino acids such as alanine and cysteine, to avoid such errors it has two additional distinct editing activities against alanine. One activity is designated as 'pretransfer' editing and involves the tRNA(Pro)-independent hydrolysis of activated Ala-AMP. The other activity is designated 'posttransfer' editing and involves deacylation of mischarged Ala-tRNA(Pro). The misacylated Cys-tRNA(Pro) is not edited by ProRS. This is Proline--tRNA ligase from Oleidesulfovibrio alaskensis (strain ATCC BAA-1058 / DSM 17464 / G20) (Desulfovibrio alaskensis).